The sequence spans 892 residues: Alpha-actinin-1 (892 aa).

N-acetylmethionine is present on Met1. The actin-binding stretch occupies residues 1 to 247 (MDHYDSQQTN…IMTYVSSFYH (247 aa)). Position 6 is a phosphoserine (Ser6). Residue Tyr12 is modified to Phosphotyrosine; by FAK1. 2 consecutive Calponin-homology (CH) domains span residues 31–135 (KQQR…LRFA) and 144–250 (TSAK…HAFS). Residues Lys95 and Lys195 each carry the N6-acetyllysine modification. Spectrin repeat units follow at residues 274–384 (QLME…WLLN), 394–499 (HLAE…ALER), 509–620 (QLYL…ALTE), and 630–733 (RLRK…EVEN). Positions 274 to 733 (QLMEDYEKLA…IARTINEVEN (460 aa)) are interaction with DDN. Residue Ser471 is modified to Phosphoserine. Lys676 carries the post-translational modification N6-acetyllysine. At Ser677 the chain carries Phosphoserine. 2 consecutive EF-hand domains span residues 746–781 (EQMN…LGYD) and 787–822 (QGEA…ETAD). Ca(2+)-binding residues include Asp759, Asp761, Ser763, Thr765, and Glu770. Residue Ser890 is modified to Phosphoserine.

Belongs to the alpha-actinin family. Homodimer; antiparallel. Interacts with MYOZ2, TTID and LPP. Interacts with DDN. Interacts with PSD. Interacts with MICALL2. Interacts with DNM2 and CTTN. Interacts with PDLIM1. Interacts with PDLIM2. Interacts with PDLIM4 (via PDZ domain). Interacts with IGSF8.

The protein localises to the cytoplasm. Its subcellular location is the cytoskeleton. The protein resides in the myofibril. It is found in the sarcomere. It localises to the z line. The protein localises to the cell membrane. Its subcellular location is the cell junction. The protein resides in the cell projection. It is found in the ruffle. In terms of biological role, F-actin cross-linking protein which is thought to anchor actin to a variety of intracellular structures. Association with IGSF8 regulates the immune synapse formation and is required for efficient T-cell activation. This is Alpha-actinin-1 (ACTN1) from Homo sapiens (Human).